The sequence spans 346 residues: Holliday junction branch migration complex subunit RuvB (346 aa).

Residues 1–182 (MSEPARLISP…FGIPVRLSFY (182 aa)) form a large ATPase domain (RuvB-L) region. ATP is bound by residues L21, R22, G63, K66, T67, T68, 129–131 (EDF), R172, Y182, and R219. A Mg(2+)-binding site is contributed by T67. Residues 183–253 (TVEELELIVR…IADEALTRLL (71 aa)) are small ATPAse domain (RuvB-S). The segment at 256-346 (NVGFDQLDKR…AQFRLFQEDN (91 aa)) is head domain (RuvB-H). The DNA site is built by R292, R311, and R316.

This sequence belongs to the RuvB family. As to quaternary structure, homohexamer. Forms an RuvA(8)-RuvB(12)-Holliday junction (HJ) complex. HJ DNA is sandwiched between 2 RuvA tetramers; dsDNA enters through RuvA and exits via RuvB. An RuvB hexamer assembles on each DNA strand where it exits the tetramer. Each RuvB hexamer is contacted by two RuvA subunits (via domain III) on 2 adjacent RuvB subunits; this complex drives branch migration. In the full resolvosome a probable DNA-RuvA(4)-RuvB(12)-RuvC(2) complex forms which resolves the HJ.

The protein resides in the cytoplasm. The enzyme catalyses ATP + H2O = ADP + phosphate + H(+). The RuvA-RuvB-RuvC complex processes Holliday junction (HJ) DNA during genetic recombination and DNA repair, while the RuvA-RuvB complex plays an important role in the rescue of blocked DNA replication forks via replication fork reversal (RFR). RuvA specifically binds to HJ cruciform DNA, conferring on it an open structure. The RuvB hexamer acts as an ATP-dependent pump, pulling dsDNA into and through the RuvAB complex. RuvB forms 2 homohexamers on either side of HJ DNA bound by 1 or 2 RuvA tetramers; 4 subunits per hexamer contact DNA at a time. Coordinated motions by a converter formed by DNA-disengaged RuvB subunits stimulates ATP hydrolysis and nucleotide exchange. Immobilization of the converter enables RuvB to convert the ATP-contained energy into a lever motion, pulling 2 nucleotides of DNA out of the RuvA tetramer per ATP hydrolyzed, thus driving DNA branch migration. The RuvB motors rotate together with the DNA substrate, which together with the progressing nucleotide cycle form the mechanistic basis for DNA recombination by continuous HJ branch migration. Branch migration allows RuvC to scan DNA until it finds its consensus sequence, where it cleaves and resolves cruciform DNA. The sequence is that of Holliday junction branch migration complex subunit RuvB from Rhizobium johnstonii (strain DSM 114642 / LMG 32736 / 3841) (Rhizobium leguminosarum bv. viciae).